The following is a 325-amino-acid chain: Tetraacyldisaccharide 4'-kinase (325 aa).

55–62 (TAGGNGKT) is an ATP binding site.

Belongs to the LpxK family.

The enzyme catalyses a lipid A disaccharide + ATP = a lipid IVA + ADP + H(+). It functions in the pathway glycolipid biosynthesis; lipid IV(A) biosynthesis; lipid IV(A) from (3R)-3-hydroxytetradecanoyl-[acyl-carrier-protein] and UDP-N-acetyl-alpha-D-glucosamine: step 6/6. Functionally, transfers the gamma-phosphate of ATP to the 4'-position of a tetraacyldisaccharide 1-phosphate intermediate (termed DS-1-P) to form tetraacyldisaccharide 1,4'-bis-phosphate (lipid IVA). The polypeptide is Tetraacyldisaccharide 4'-kinase (Salmonella dublin (strain CT_02021853)).